Consider the following 373-residue polypeptide: tRNA-specific 2-thiouridylase MnmA (373 aa).

Residues 12–19 (GMSGGVDS) and Met-38 contribute to the ATP site. Residues 98–100 (NPD) are interaction with target base in tRNA. The active-site Nucleophile is Cys-103. A disulfide bridge connects residues Cys-103 and Cys-200. Gly-127 is a binding site for ATP. The interval 150–152 (KDQ) is interaction with tRNA. Catalysis depends on Cys-200, which acts as the Cysteine persulfide intermediate. Residues 312–313 (RY) are interaction with tRNA.

Belongs to the MnmA/TRMU family.

Its subcellular location is the cytoplasm. It catalyses the reaction S-sulfanyl-L-cysteinyl-[protein] + uridine(34) in tRNA + AH2 + ATP = 2-thiouridine(34) in tRNA + L-cysteinyl-[protein] + A + AMP + diphosphate + H(+). Its function is as follows. Catalyzes the 2-thiolation of uridine at the wobble position (U34) of tRNA, leading to the formation of s(2)U34. This Streptococcus pneumoniae (strain JJA) protein is tRNA-specific 2-thiouridylase MnmA.